Reading from the N-terminus, the 365-residue chain is uncharacterized protein (365 aa).

This sequence belongs to the NAD(P)-dependent epimerase/dehydratase family.

Its subcellular location is the cytoplasm. The protein localises to the nucleus. This is an uncharacterized protein from Schizosaccharomyces pombe (strain 972 / ATCC 24843) (Fission yeast).